Consider the following 250-residue polypeptide: Sugar fermentation stimulation protein homolog (250 aa).

The protein belongs to the SfsA family.

The chain is Sugar fermentation stimulation protein homolog from Trichodesmium erythraeum (strain IMS101).